The primary structure comprises 681 residues: Potassium-transporting ATPase ATP-binding subunit (681 aa).

A run of 4 helical transmembrane segments spans residues 30 to 50, 59 to 79, 216 to 236, and 255 to 275; these read LLVYVGAILATSLYFLGFFGI, LAIALILWFTVLFANFAEAIA, ILLVTLSIIFLAVSATLLPFT, and IALLVCLAPTTIGALLSSIGI. The 4-aspartylphosphate intermediate role is filled by Asp306. ATP is bound by residues Asp343, Glu347, 376–383, and Lys394; that span reads FTATTRMS. Asp517 and Asp521 together coordinate Mg(2+). Transmembrane regions (helical) follow at residues 587-607, 615-635, and 661-681; these read FAIIPVLFYGIFPQLEALNLM, AILSAIIYNALIIIFLIPLSL, and LVAPFIAIKLIDMLLTVLGIV.

The protein belongs to the cation transport ATPase (P-type) (TC 3.A.3) family. Type IA subfamily. As to quaternary structure, the system is composed of three essential subunits: KdpA, KdpB and KdpC.

It localises to the cell membrane. It catalyses the reaction K(+)(out) + ATP + H2O = K(+)(in) + ADP + phosphate + H(+). Part of the high-affinity ATP-driven potassium transport (or Kdp) system, which catalyzes the hydrolysis of ATP coupled with the electrogenic transport of potassium into the cytoplasm. This subunit is responsible for energy coupling to the transport system and for the release of the potassium ions to the cytoplasm. This is Potassium-transporting ATPase ATP-binding subunit from Listeria welshimeri serovar 6b (strain ATCC 35897 / DSM 20650 / CCUG 15529 / CIP 8149 / NCTC 11857 / SLCC 5334 / V8).